Reading from the N-terminus, the 44-residue chain is Protein Tat (44 aa).

The interval 1–44 (APEDSQSHQVSLSKQPASQAGGDPTGPKESKKKVESETETDPVP) is disordered. Over residues 7-18 (SHQVSLSKQPAS) the composition is skewed to polar residues. K14 participates in a covalent cross-link: Glycyl lysine isopeptide (Lys-Gly) (interchain with G-Cter in ubiquitin). A Cell attachment site motif is present at residues 21 to 23 (GGD). A compositionally biased stretch (basic and acidic residues) spans 26–36 (GPKESKKKVES).

It belongs to the lentiviruses Tat family. As to quaternary structure, interacts with host CCNT1. Associates with the P-TEFb complex composed at least of Tat, P-TEFb (CDK9 and CCNT1), TAR RNA, RNA Pol II. Recruits the HATs CREBBP, TAF1/TFIID, EP300, PCAF and GCN5L2. Interacts with host KAT5/Tip60; this interaction targets the latter to degradation. Interacts with the host deacetylase SIRT1. Interacts with host capping enzyme RNGTT; this interaction stimulates RNGTT. Binds to host KDR, and to the host integrins ITGAV/ITGB3 and ITGA5/ITGB1. Interacts with host KPNB1/importin beta-1 without previous binding to KPNA1/importin alpha-1. Interacts with EIF2AK2. Interacts with host nucleosome assembly protein NAP1L1; this interaction may be required for the transport of Tat within the nucleus, since the two proteins interact at the nuclear rim. Interacts with host C1QBP/SF2P32; this interaction involves lysine-acetylated Tat. Interacts with the host chemokine receptors CCR2, CCR3 and CXCR4. Interacts with host DPP4/CD26; this interaction may trigger an anti-proliferative effect. Interacts with host LDLR. Interacts with the host extracellular matrix metalloproteinase MMP1. Interacts with host PRMT6; this interaction mediates Tat's methylation. Interacts with, and is ubiquitinated by MDM2/Hdm2. Interacts with host PSMC3 and HTATIP2. Interacts with STAB1; this interaction may overcome SATB1-mediated repression of IL2 and IL2RA (interleukin) in T cells by binding to the same domain than HDAC1. Interacts (when acetylated) with human CDK13, thereby increasing HIV-1 mRNA splicing and promoting the production of the doubly spliced HIV-1 protein Nef. In terms of processing, acetylation by EP300, CREBBP, GCN5L2/GCN5 and PCAF regulates the transactivation activity of Tat. Post-translationally, phosphorylated by EIF2AK2 on serine and threonine residues adjacent to the basic region important for TAR RNA binding and function. Phosphorylation of Tat by EIF2AK2 is dependent on the prior activation of EIF2AK2 by dsRNA. Asymmetrical arginine methylation by host PRMT6 seems to diminish the transactivation capacity of Tat and affects the interaction with host CCNT1. In terms of processing, polyubiquitination by MDM2 does not target Tat to degradation, but activates its transactivation function and fosters interaction with CCNT1 and TAR RNA.

The protein resides in the host nucleus. Its subcellular location is the host nucleolus. It localises to the host cytoplasm. The protein localises to the secreted. Its function is as follows. Transcriptional activator that increases RNA Pol II processivity, thereby increasing the level of full-length viral transcripts. Recognizes a hairpin structure at the 5'-LTR of the nascent viral mRNAs referred to as the transactivation responsive RNA element (TAR) and recruits the cyclin T1-CDK9 complex (P-TEFb complex) that will in turn hyperphosphorylate the RNA polymerase II to allow efficient elongation. The CDK9 component of P-TEFb and other Tat-activated kinases hyperphosphorylate the C-terminus of RNA Pol II that becomes stabilized and much more processive. Other factors such as HTATSF1/Tat-SF1, SUPT5H/SPT5, and HTATIP2 are also important for Tat's function. Besides its effect on RNA Pol II processivity, Tat induces chromatin remodeling of proviral genes by recruiting the histone acetyltransferases (HATs) CREBBP, EP300 and PCAF to the chromatin. This also contributes to the increase in proviral transcription rate, especially when the provirus integrates in transcriptionally silent region of the host genome. To ensure maximal activation of the LTR, Tat mediates nuclear translocation of NF-kappa-B by interacting with host RELA. Through its interaction with host TBP, Tat may also modulate transcription initiation. Tat can reactivate a latently infected cell by penetrating in it and transactivating its LTR promoter. In the cytoplasm, Tat is thought to act as a translational activator of HIV-1 mRNAs. Functionally, extracellular circulating Tat can be endocytosed by surrounding uninfected cells via the binding to several surface receptors such as CD26, CXCR4, heparan sulfate proteoglycans (HSPG) or LDLR. Neurons are rarely infected, but they internalize Tat via their LDLR. Endosomal low pH allows Tat to cross the endosome membrane to enter the cytosol and eventually further translocate into the nucleus, thereby inducing severe cell dysfunctions ranging from cell activation to cell death. Through its interaction with nuclear HATs, Tat is potentially able to control the acetylation-dependent cellular gene expression. Tat seems to inhibit the HAT activity of KAT5/Tip60 and TAF1, and consequently modify the expression of specific cellular genes. Modulates the expression of many cellular genes involved in cell survival, proliferation or in coding for cytokines (such as IL10) or cytokine receptors. May be involved in the derepression of host interleukin IL2 expression. Mediates the activation of cyclin-dependent kinases and dysregulation of microtubule network. Tat plays a role in T-cell and neurons apoptosis. Tat induced neurotoxicity and apoptosis probably contribute to neuroAIDS. Host extracellular matrix metalloproteinase MMP1 cleaves Tat and decreases Tat's mediated neurotoxicity. Circulating Tat also acts as a chemokine-like and/or growth factor-like molecule that binds to specific receptors on the surface of the cells, affecting many cellular pathways. In the vascular system, Tat binds to ITGAV/ITGB3 and ITGA5/ITGB1 integrins dimers at the surface of endothelial cells and competes with bFGF for heparin-binding sites, leading to an excess of soluble bFGF. Binds to KDR/VEGFR-2. All these Tat-mediated effects enhance angiogenesis in Kaposi's sarcoma lesions. This is Protein Tat from Human immunodeficiency virus type 1 group M subtype B (isolate BRVA) (HIV-1).